Consider the following 736-residue polypeptide: NADPH--cytochrome P450 reductase (736 aa).

Position 1 (Met-1) is a topological domain, lumenal. A helical transmembrane segment spans residues Ala-2–Phe-24. At Arg-25 to Ser-736 the chain is on the cytoplasmic side. The 151-residue stretch at Ile-66–Trp-216 folds into the Flavodoxin-like domain. Residues Ser-72–Ala-77, Ala-123–Gly-126, Leu-165–Asn-174, and Asp-200 contribute to the FMN site. Residues Lys-269–Gly-546 enclose the FAD-binding FR-type domain. Arg-289 is a binding site for NADP(+). FAD is bound by residues Arg-456–Ser-459, Thr-474–Val-476, Tyr-480, and Gly-495–Ser-498. NADP(+) is bound by residues Thr-577, Ser-648 to Arg-649, and Lys-659 to Gln-663. Trp-735 is a binding site for FAD.

The protein belongs to the NADPH--cytochrome P450 reductase family. In the N-terminal section; belongs to the flavodoxin family. It in the C-terminal section; belongs to the flavoprotein pyridine nucleotide cytochrome reductase family. The cofactor is FAD. It depends on FMN as a cofactor.

The protein localises to the endoplasmic reticulum membrane. The protein resides in the mitochondrion outer membrane. Its subcellular location is the cell membrane. The catalysed reaction is 2 oxidized [cytochrome P450] + NADPH = 2 reduced [cytochrome P450] + NADP(+) + H(+). In terms of biological role, this enzyme is required for electron transfer from NADP to cytochrome P450 in microsomes. It can also provide electron transfer to heme oxygenase and cytochrome B5. Involved in ergosterol biosynthesis. The sequence is that of NADPH--cytochrome P450 reductase (CPR) from Phanerodontia chrysosporium (White-rot fungus).